The following is a 358-amino-acid chain: Probable arabinan endo-1,5-alpha-L-arabinosidase B (358 aa).

The N-terminal stretch at 1–16 is a signal peptide; it reads MVLVATLFSLFTVSLC. Catalysis depends on D39, which acts as the Proton acceptor. N-linked (GlcNAc...) asparagine glycosylation is present at N194. Residues 202–227 are disordered; it reads HLAKHPKTERVNSQDQNPDPLCRDSS. E233 serves as the catalytic Proton donor.

This sequence belongs to the glycosyl hydrolase 43 family.

It localises to the secreted. The catalysed reaction is Endohydrolysis of (1-&gt;5)-alpha-arabinofuranosidic linkages in (1-&gt;5)-arabinans.. The protein operates within glycan metabolism; L-arabinan degradation. Endo-1,5-alpha-L-arabinanase involved in degradation of pectin. Its preferred substrate is linear 1,5-alpha-L-arabinan. The polypeptide is Probable arabinan endo-1,5-alpha-L-arabinosidase B (abnB) (Aspergillus flavus (strain ATCC 200026 / FGSC A1120 / IAM 13836 / NRRL 3357 / JCM 12722 / SRRC 167)).